The following is a 127-amino-acid chain: Cyclin-dependent kinase 2-associated protein 2 (127 aa).

The segment at 1-49 is disordered; it reads MSYKPIAPAPSSTPGSSTPGPGTPVPTAGSVPSPSGSVPGAAGPFRPLF. Positions 9–44 are enriched in low complexity; the sequence is APSSTPGSSTPGPGTPVPTAGSVPSPSGSVPGAAGP. Residues 65 to 107 are interaction with CDK2; sequence PPGAQGSQSTYTDLLSVIEEMGKEIRPTYAGSKSAMERLKRGI.

This sequence belongs to the CDK2AP family. As to quaternary structure, component of the nucleosome remodeling and deacetylase (NuRD) repressor complex, composed of core proteins MTA1, MTA2, MTA3, RBBP4, RBBP7, HDAC1, HDAC2, MBD2, MBD3, and peripherally associated proteins CDK2AP1, CDK2AP2, GATAD2A, GATAD2B, CHD3, CHD4 and CHD5. The exact stoichiometry of the NuRD complex is unknown, and some subunits such as MBD2 and MBD3, GATAD2A and GATAD2B, and CHD3, CHD4 and CHD5 define mutually exclusive NuRD complexes. Interacts with CDK2AP1. Interacts with CDK2. Interacts with MAPK1. In terms of processing, phosphorylated by MAPK1 and CDK2.

It is found in the cytoplasm. The protein resides in the nucleus. Functionally, acts as a component of the histone deacetylase NuRD complex which participates in the remodeling of chromatin. Inhibits cell cycle G1/S phase transition by repressing CDK2 expression and activation; represses CDK2 activation by inhibiting its interaction with cyclin E and A. Plays a role in regulating the self-renewal of embryonic stem cells (ESCs) and in maintaining cell survival during terminal differentiation of ESCs. Regulates microtubule organization of metaphase II oocytes. In Bos taurus (Bovine), this protein is Cyclin-dependent kinase 2-associated protein 2 (CDK2AP2).